The sequence spans 202 residues: Small ribosomal subunit protein uS4 (202 aa).

Basic residues predominate over residues 1-13 (MSRYRGPRLRITR). Residues 1-43 (MSRYRGPRLRITRRLGDLPGLTRKAAKRSHPPGQHGQARRKRS) form a disordered region. The 63-residue stretch at 90–152 (NRLDNVCFRL…KASKQLAQAN (63 aa)) folds into the S4 RNA-binding domain.

The protein belongs to the universal ribosomal protein uS4 family. Part of the 30S ribosomal subunit. Contacts protein S5. The interaction surface between S4 and S5 is involved in control of translational fidelity.

In terms of biological role, one of the primary rRNA binding proteins, it binds directly to 16S rRNA where it nucleates assembly of the body of the 30S subunit. With S5 and S12 plays an important role in translational accuracy. In Prochlorococcus marinus (strain NATL2A), this protein is Small ribosomal subunit protein uS4.